A 199-amino-acid polypeptide reads, in one-letter code: Guanylate kinase (199 aa).

Positions 20 to 198 constitute a Guanylate kinase-like domain; sequence GKLIILTGPS…ALQAIEVALF (179 aa). 27–34 contacts ATP; that stretch reads GPSGVGKG.

Belongs to the guanylate kinase family.

It localises to the cytoplasm. It carries out the reaction GMP + ATP = GDP + ADP. Its function is as follows. Essential for recycling GMP and indirectly, cGMP. The chain is Guanylate kinase from Nostoc sp. (strain PCC 7120 / SAG 25.82 / UTEX 2576).